Consider the following 576-residue polypeptide: Trehalase (576 aa).

The signal sequence occupies residues 1 to 20 (MTWELHLLLLLGLGLRSQEA). The N-linked (GlcNAc...) asparagine glycan is linked to asparagine 75. Residues arginine 165, 172 to 173 (WD), asparagine 209, and 218 to 220 (RSQ) contribute to the substrate site. N-linked (GlcNAc...) asparagine glycosylation occurs at asparagine 258. Residues 283–285 (RPE) and glycine 316 contribute to the substrate site. Aspartate 318 acts as the Proton donor/acceptor in catalysis. Residue asparagine 366 is glycosylated (N-linked (GlcNAc...) asparagine). Glutamate 511 (proton donor/acceptor) is an active-site residue. Glutamate 526 lines the substrate pocket. A lipid anchor (GPI-anchor amidated serine) is attached at serine 553. A propeptide spans 554–576 (GTQLASLGPHCLVAALLLSLLLQ) (removed in mature form).

The protein belongs to the glycosyl hydrolase 37 family. As to quaternary structure, homodimer; disulfide-linked.

The protein resides in the cell membrane. It carries out the reaction alpha,alpha-trehalose + H2O = alpha-D-glucose + beta-D-glucose. Functionally, intestinal trehalase is probably involved in the hydrolysis of ingested trehalose. The sequence is that of Trehalase from Mus musculus (Mouse).